A 339-amino-acid chain; its full sequence is Glycerol-3-phosphate dehydrogenase [NAD(P)+] (339 aa).

Serine 11, tryptophan 12, and lysine 109 together coordinate NADPH. Residues lysine 109, glycine 140, and serine 142 each coordinate sn-glycerol 3-phosphate. Alanine 144 contributes to the NADPH binding site. 5 residues coordinate sn-glycerol 3-phosphate: lysine 195, aspartate 249, serine 259, arginine 260, and asparagine 261. Lysine 195 (proton acceptor) is an active-site residue. Arginine 260 is an NADPH binding site. Positions 284 and 286 each coordinate NADPH.

The protein belongs to the NAD-dependent glycerol-3-phosphate dehydrogenase family.

The protein resides in the cytoplasm. It carries out the reaction sn-glycerol 3-phosphate + NAD(+) = dihydroxyacetone phosphate + NADH + H(+). It catalyses the reaction sn-glycerol 3-phosphate + NADP(+) = dihydroxyacetone phosphate + NADPH + H(+). Its pathway is membrane lipid metabolism; glycerophospholipid metabolism. In terms of biological role, catalyzes the reduction of the glycolytic intermediate dihydroxyacetone phosphate (DHAP) to sn-glycerol 3-phosphate (G3P), the key precursor for phospholipid synthesis. This is Glycerol-3-phosphate dehydrogenase [NAD(P)+] from Lactobacillus johnsonii (strain CNCM I-12250 / La1 / NCC 533).